Here is a 112-residue protein sequence, read N- to C-terminus: Large ribosomal subunit protein P1w (112 aa).

Residues 85 to 112 (AAAPAAEEKKKDEPAEESDGDLGFGLFD) form a disordered region. Ser102 carries the phosphoserine modification.

Belongs to the eukaryotic ribosomal protein P1/P2 family. In terms of assembly, P1 and P2 exist as dimers at the large ribosomal subunit.

Plays an important role in the elongation step of protein synthesis. The sequence is that of Large ribosomal subunit protein P1w (RPP1A) from Arabidopsis thaliana (Mouse-ear cress).